A 152-amino-acid chain; its full sequence is ADP-ribose glycohydrolase OARD1 (152 aa).

Alanine 2 carries the N-acetylalanine modification. Positions 2–152 (AGSPNEDSEG…TDIRITVYTL (151 aa)) constitute a Macro domain. Serine 4 bears the Phosphoserine mark. Leucine 21 lines the substrate pocket. Lysine 84 serves as the catalytic Nucleophile. Substrate-binding positions include 119 to 125 (RIGCGLD) and leucine 152. Aspartate 125 serves as the catalytic Proton acceptor.

The protein localises to the nucleus. The protein resides in the nucleoplasm. Its subcellular location is the nucleolus. It localises to the chromosome. It catalyses the reaction 2''-O-acetyl-ADP-D-ribose + H2O = ADP-D-ribose + acetate + H(+). The enzyme catalyses 5-O-(ADP-D-ribosyl)-L-glutamyl-[protein] + H2O = L-glutamyl-[protein] + ADP-D-ribose + H(+). The catalysed reaction is alpha-NAD(+) + H2O = ADP-D-ribose + nicotinamide + H(+). With respect to regulation, subject to competitive inhibition by the product ADP-ribose. ADP-ribose glycohydrolase that hydrolyzes ADP-ribose and acts on different substrates, such as proteins ADP-ribosylated on glutamate and O-acetyl-ADP-D-ribose. Specifically acts as a glutamate mono-ADP-ribosylhydrolase by mediating the removal of mono-ADP-ribose attached to glutamate residues on proteins. Does not act on poly-ADP-ribosylated proteins: the poly-ADP-ribose chain of poly-ADP-ribosylated glutamate residues must by hydrolyzed into mono-ADP-ribosylated glutamate by PARG to become a substrate for OARD1. Deacetylates O-acetyl-ADP ribose, a signaling molecule generated by the deacetylation of acetylated lysine residues in histones and other proteins. Catalyzes the deacylation of O-acetyl-ADP-ribose, O-propionyl-ADP-ribose and O-butyryl-ADP-ribose, yielding ADP-ribose plus acetate, propionate and butyrate, respectively. The chain is ADP-ribose glycohydrolase OARD1 from Bos taurus (Bovine).